The chain runs to 283 residues: Bifunctional protein FolD (283 aa).

NADP(+)-binding positions include 165-167 (GRS), serine 190, and valine 231.

It belongs to the tetrahydrofolate dehydrogenase/cyclohydrolase family. As to quaternary structure, homodimer. Interacts with BrxC.

It carries out the reaction (6R)-5,10-methylene-5,6,7,8-tetrahydrofolate + NADP(+) = (6R)-5,10-methenyltetrahydrofolate + NADPH. The enzyme catalyses (6R)-5,10-methenyltetrahydrofolate + H2O = (6R)-10-formyltetrahydrofolate + H(+). It participates in one-carbon metabolism; tetrahydrofolate interconversion. In terms of biological role, catalyzes the oxidation of 5,10-methylenetetrahydrofolate to 5,10-methenyltetrahydrofolate and then the hydrolysis of 5,10-methenyltetrahydrofolate to 10-formyltetrahydrofolate. In Bacillus subtilis (strain 168), this protein is Bifunctional protein FolD.